Reading from the N-terminus, the 244-residue chain is MPAPLETCISDLDCSSSNSSSDLSSFLTDEEDCARLQPLASTSGLSVPARRSAPALSGASNVPGAQDEEQERRRRRGRARVRSEALLHSLRRSRRVKANDRERNRMHNLNAALDALRSVLPSFPDDTKLTKIETLRFAYNYIWALAETLRLADQGLPGGSARERLLPPQCVPCLPGPPSPASDTESWGSGAAASPCATVASPLSDPSSPSASEDFTYGPGDPLFSFPGLPKDLLHTTPCFIPYH.

Disordered stretches follow at residues 1–27 and 39–82; these read MPAPLETCISDLDCSSSNSSSDLSSFL and LAST…ARVR. The span at 10–27 shows a compositional bias: low complexity; sequence SDLDCSSSNSSSDLSSFL. The region spanning 93–145 is the bHLH domain; that stretch reads SRRVKANDRERNRMHNLNAALDALRSVLPSFPDDTKLTKIETLRFAYNYIWAL.

As to quaternary structure, efficient DNA binding requires dimerization with another bHLH protein. As to expression, expression restricted to the embryonic nervous system.

The protein resides in the nucleus. Functionally, acts as a transcriptional regulator. Involved in the initiation of neuronal differentiation. Activates transcription by binding to the E box (5'-CANNTG-3'). Associates with chromatin to enhancer regulatory elements in genes encoding key transcriptional regulators of neurogenesis. This chain is Neurogenin-1 (Neurog1), found in Mus musculus (Mouse).